The primary structure comprises 156 residues: Small ribosomal subunit protein uS7 (156 aa).

It belongs to the universal ribosomal protein uS7 family. Part of the 30S ribosomal subunit. Contacts proteins S9 and S11.

In terms of biological role, one of the primary rRNA binding proteins, it binds directly to 16S rRNA where it nucleates assembly of the head domain of the 30S subunit. Is located at the subunit interface close to the decoding center, probably blocks exit of the E-site tRNA. The protein is Small ribosomal subunit protein uS7 of Phytoplasma mali (strain AT).